Reading from the N-terminus, the 317-residue chain is MARRSKGRFIDGIVLLDKATGMSSNFALQRVKRFFNANKAGHTGALDPLATGMLPICLGEATKFSQHLLDSDKRYLVTAKLGQRTDTSDSDGEVVQTRPIEFTEAQLMSALEHFRGDTLQVPSMYSALKYQGQPLYKYAREGIEVPREARPITVFELNFISLEGDELTLDIHCSKGTYIRTIIDDLGEMLGCGAHVIMLRRTQVAHYPYDKMVTLEQLEALVAKAQEEQLDPSSLLDSLLLPMDTAVADFPEVNVPDASAAYLMQGQAVRVSGLVADKLVRITLGTERRFVGIGEMNEDGLLAPKRLVVIHDQAKAS.

Residue aspartate 47 is the Nucleophile of the active site.

It belongs to the pseudouridine synthase TruB family. Type 1 subfamily.

The enzyme catalyses uridine(55) in tRNA = pseudouridine(55) in tRNA. In terms of biological role, responsible for synthesis of pseudouridine from uracil-55 in the psi GC loop of transfer RNAs. This chain is tRNA pseudouridine synthase B, found in Shewanella sp. (strain MR-4).